Here is a 184-residue protein sequence, read N- to C-terminus: mRNA transport regulator MTR2 (184 aa).

A disordered region spans residues 111–135 (KMGQDATVPIQPNNTGNRNRPNDMN). Residues 120–129 (IQPNNTGNRN) are compositionally biased toward polar residues. Threonine 125 is modified (phosphothreonine).

In terms of assembly, interacts with MEX67.

It localises to the nucleus. Its function is as follows. Affects mRNA transport from the nucleus to the cytoplasm. The polypeptide is mRNA transport regulator MTR2 (MTR2) (Saccharomyces cerevisiae (strain ATCC 204508 / S288c) (Baker's yeast)).